The sequence spans 887 residues: MSDEQDQGETKGRLSLRPVNRGELGRTVDAGSVRQSFSHGRSKVVQVEVRKKRGGAAGAETGRPSAPSRASGGAAAPRGLTAAEQAARQRAVVEQQREAARLEAERREQEKISILSAAEEARRKAEEEARAAEEAERLRAEEEARRREEEEAERRRAAEASQATAAPPAPAAAASPRAAMPAPTAAPARPGAAPARRTAPVPPATSASETLRLRAARTGRDEEEEASRPARRPGSGAAPSRKPSVPAPKKVGDDRRRGARIDVQAALSGDDERVRSLASVRRQRDRERRQAELERLRSDQVRVVREVVLPETITVQELANRMAARVPEVVKSLMKLGVMATATQTIDADTAELVVEEFGHRSKRVSESDVELGLEGQEDSETDLKVRPPVVTIMGHVDHGKTSLLDALRSTDVAAREAGGITQHIGAYQVTLESGAKMTFIDTPGHEAFTAMRARGASVTDIVILVVAADDGVMPQTVEAIRHAKAANVPIIVAINKIDRPDANPNRVRSELLQYDIAVEAMGGETQDVEVSALKRQGLDALQEAILLQAELLDLKANPNRSAEGAVIESSLDRGRGPVATVLVQKGTLRQGDIVVAGTEQGRVRAMLDDHGQPLKDAGPSTPVEILGLSGVPGAGEVFVVVENEGRAREIAEFRQRKLREHAAAAGAAARGTLDQMLARIQAGEQKEVALVIKADVQGSAEAIQATVQKLGNDEVRVRVLLAGVGQITESDVQLAKASDAIIVAFNVRANAQARTLASRDGVDIRYYSIIYQVSDDIETMVKGKLAPIEREKFLGYAEIRQVFNITKVGKVAGCYVTEGLVKRGAGVRLLREGVVIHQGELSQLKRFKDDVREVARGYECGLSFAGFSDLREGDVVECYETETVPA.

Residues 1 to 259 (MSDEQDQGET…KVGDDRRRGA (259 aa)) form a disordered region. Residues 62 to 94 (GRPSAPSRASGGAAAPRGLTAAEQAARQRAVVE) are compositionally biased toward low complexity. Basic and acidic residues-rich tracts occupy residues 95 to 111 (QQRE…EQEK) and 119 to 158 (EEAR…RRAA). The span at 159–210 (EASQATAAPPAPAAAASPRAAMPAPTAAPARPGAAPARRTAPVPPATSASET) shows a compositional bias: low complexity. Residues 250–259 (KVGDDRRRGA) show a composition bias toward basic and acidic residues. Residues 386 to 556 (VRPPVVTIMG…LLQAELLDLK (171 aa)) enclose the tr-type G domain. The interval 395–402 (GHVDHGKT) is G1. 395 to 402 (GHVDHGKT) serves as a coordination point for GTP. The G2 stretch occupies residues 420-424 (GITQH). The tract at residues 442–445 (DTPG) is G3. GTP is bound by residues 442–446 (DTPGH) and 496–499 (NKID). Residues 496 to 499 (NKID) are G4. The segment at 532–534 (SAL) is G5.

This sequence belongs to the TRAFAC class translation factor GTPase superfamily. Classic translation factor GTPase family. IF-2 subfamily.

Its subcellular location is the cytoplasm. In terms of biological role, one of the essential components for the initiation of protein synthesis. Protects formylmethionyl-tRNA from spontaneous hydrolysis and promotes its binding to the 30S ribosomal subunits. Also involved in the hydrolysis of GTP during the formation of the 70S ribosomal complex. The chain is Translation initiation factor IF-2 from Acidiphilium cryptum (strain JF-5).